The primary structure comprises 1203 residues: MAGHDVQYGKHRTRRSFSRIKEVLDLPNLIEIQTDSFKAFLDHGLKEVFEDVLPISNFTDTMELEFVGYEIKEPKYTLEEARIHDASYSAPIFVTFRLINKETSEIKTQEVFFGDFPIMTEMGTFIINGGERIIVSQLVRSPGVYFNDKVDKNGKVGYGSTVIPNRGAWLELESDSKDITYTRIDRTRKIPFTTLVRALGFSGDDEIFDIFGDSELVRNTVEKDIHKNPMDSRTDEALKEIYERLRPGEPKTAESSRSLLVARFFDPRRYDLAAVGRYKINKKLNVKTRLLNQTIAEPLVDPETGEILVEAGTIMTRSVIESIESHLDGDLNKIVYIPNDAAVVTEPVVLQKFKVIAPTDPDRVVTIIGNANPDDKVRTVTPADILAEMSYFLNLAEGLGRVDDIDHLGNRRIRAVGELLANQVRLGLSRMERNVRERMSVQDNEVLTPQQIINIRPVTAAVKEFFGSSQLSQFMDQHNPLSELSHKRRLSALGPGGLTRDRAGYEVRDVHYTHYGRMCPIETPEGPNIGLINNLSSYGHLNKYGFVQTPYRKVDRETGVVTNEIVWLTADEEDEYTVAQANSRLNEDGTFAEKIVMGRHQGVNQEYPANIVDYMDVSPKQVVAVATACIPFLENDDSNRALMGANMQRQAVPLINPQAPYVGTGMEYQAAHDSGAAVIAQYDGKVTYADADKVEVRREDGSLDVYHIQKFRRSNSGTAYNQRTLVKVGDVVEKGDFIADGPSMENGEMALGQNPIVAYMTWEGYNFEDAVIMSERLVKDDVYTSVHLEEYESETRDTKLGPEEITREIPNVGEDALKDLDEMGIIRIGAEVKEGDILVGKVTPKGEKDLSAEERLLHAIFGDKSREVRDTSLRVPHGADGVVRDVKIFTRVNGDELQSGVNMLVRVYIAQKRKIKVGDKMAGRHGNKGVVSRIVPVEDMPYLPDGTPVDIMLNPLGVPSRMNIGQVMELHLGMAARTLGIHIATPVFDGASSEDLWSTVKEAGMDSDAKTILYDGRTGEPFDNRVSVGVMYMIKLHHMVDDKLHARSVGPYSTVTQQPLGGKAQFGGQRFGEMEVWALEAYGASNVLQEILTYKSDDINGRLKAYEAITKGKPIPKPGVPESFRVLVKELQSLGLDMRVLDEDDQEVELRDLDEGMDEDVIHVDDLEKAREKAAQEAKAAFEAEEAEKATKAEATEEAAEQE.

The span at 1174 to 1195 (AAQEAKAAFEAEEAEKATKAEA) shows a compositional bias: basic and acidic residues. The tract at residues 1174–1203 (AAQEAKAAFEAEEAEKATKAEATEEAAEQE) is disordered.

The protein belongs to the RNA polymerase beta chain family. The RNAP catalytic core consists of 2 alpha, 1 beta, 1 beta' and 1 omega subunit. When a sigma factor is associated with the core the holoenzyme is formed, which can initiate transcription.

The catalysed reaction is RNA(n) + a ribonucleoside 5'-triphosphate = RNA(n+1) + diphosphate. In terms of biological role, DNA-dependent RNA polymerase catalyzes the transcription of DNA into RNA using the four ribonucleoside triphosphates as substrates. The polypeptide is DNA-directed RNA polymerase subunit beta (Streptococcus pneumoniae (strain JJA)).